Consider the following 578-residue polypeptide: Proline--tRNA ligase (578 aa).

Belongs to the class-II aminoacyl-tRNA synthetase family. ProS type 1 subfamily. As to quaternary structure, homodimer.

The protein localises to the cytoplasm. The enzyme catalyses tRNA(Pro) + L-proline + ATP = L-prolyl-tRNA(Pro) + AMP + diphosphate. Its function is as follows. Catalyzes the attachment of proline to tRNA(Pro) in a two-step reaction: proline is first activated by ATP to form Pro-AMP and then transferred to the acceptor end of tRNA(Pro). As ProRS can inadvertently accommodate and process non-cognate amino acids such as alanine and cysteine, to avoid such errors it has two additional distinct editing activities against alanine. One activity is designated as 'pretransfer' editing and involves the tRNA(Pro)-independent hydrolysis of activated Ala-AMP. The other activity is designated 'posttransfer' editing and involves deacylation of mischarged Ala-tRNA(Pro). The misacylated Cys-tRNA(Pro) is not edited by ProRS. In Burkholderia vietnamiensis (strain G4 / LMG 22486) (Burkholderia cepacia (strain R1808)), this protein is Proline--tRNA ligase.